The sequence spans 188 residues: Acireductone dioxygenase (188 aa).

A disordered region spans residues 1–20; that stretch reads MSRLRIFADSNPTTPHFDSR. Fe(2+) is bound by residues histidine 97, histidine 99, glutamate 103, and histidine 141. Residues histidine 97, histidine 99, glutamate 103, and histidine 141 each contribute to the Ni(2+) site.

The protein belongs to the acireductone dioxygenase (ARD) family. As to quaternary structure, monomer. Fe(2+) serves as cofactor. Requires Ni(2+) as cofactor.

The enzyme catalyses 1,2-dihydroxy-5-(methylsulfanyl)pent-1-en-3-one + O2 = 3-(methylsulfanyl)propanoate + CO + formate + 2 H(+). The catalysed reaction is 1,2-dihydroxy-5-(methylsulfanyl)pent-1-en-3-one + O2 = 4-methylsulfanyl-2-oxobutanoate + formate + 2 H(+). Its pathway is amino-acid biosynthesis; L-methionine biosynthesis via salvage pathway; L-methionine from S-methyl-5-thio-alpha-D-ribose 1-phosphate: step 5/6. Catalyzes 2 different reactions between oxygen and the acireductone 1,2-dihydroxy-3-keto-5-methylthiopentene (DHK-MTPene) depending upon the metal bound in the active site. Fe-containing acireductone dioxygenase (Fe-ARD) produces formate and 2-keto-4-methylthiobutyrate (KMTB), the alpha-ketoacid precursor of methionine in the methionine recycle pathway. Ni-containing acireductone dioxygenase (Ni-ARD) produces methylthiopropionate, carbon monoxide and formate, and does not lie on the methionine recycle pathway. The sequence is that of Acireductone dioxygenase from Xanthomonas campestris pv. campestris (strain 8004).